Consider the following 204-residue polypeptide: Probable nicotinate-nucleotide adenylyltransferase (204 aa).

Belongs to the NadD family.

It catalyses the reaction nicotinate beta-D-ribonucleotide + ATP + H(+) = deamido-NAD(+) + diphosphate. It participates in cofactor biosynthesis; NAD(+) biosynthesis; deamido-NAD(+) from nicotinate D-ribonucleotide: step 1/1. Its function is as follows. Catalyzes the reversible adenylation of nicotinate mononucleotide (NaMN) to nicotinic acid adenine dinucleotide (NaAD). This is Probable nicotinate-nucleotide adenylyltransferase from Dehalococcoides mccartyi (strain CBDB1).